Reading from the N-terminus, the 2639-residue chain is BAH and coiled-coil domain-containing protein 1 (2639 aa).

Disordered stretches follow at residues 23–49 (SAAA…GKYF), 84–107 (SAAS…GSHP), 188–249 (APAH…GKER), 669–702 (FLSS…RQPP), 716–746 (VSRS…PRST), 939–1047 (QRAA…QSTA), 1104–1331 (SDVH…HSSG), 1457–1513 (QREL…KKVK), 1582–1666 (KVKS…LGTE), 1722–1776 (EVKI…RDAL), 1868–1893 (FDDN…PLSA), and 2057–2119 (KKVS…DHFL). Composition is skewed to low complexity over residues 24–41 (AAAA…QPPA) and 84–98 (SAAS…SSPP). Composition is skewed to basic and acidic residues over residues 211-247 (GPKD…DGGK) and 679-698 (ERPD…DGEV). Residue lysine 222 is modified to N6-acetyllysine. The span at 946–964 (RKPEDQHLDLEEPAQEKAP) shows a compositional bias: basic and acidic residues. The segment covering 972 to 988 (ALTPTAPGAPSPAAGPT) has biased composition (low complexity). The segment covering 989 to 1013 (KLPPCCHPPDPKPPASSPTPPPRPS) has biased composition (pro residues). Over residues 1106 to 1122 (VHSSNLEDPETMQTTAP) the composition is skewed to polar residues. Residues 1182–1198 (LEGLQELQCAALLEAGG) are compositionally biased toward low complexity. Positions 1212-1221 (AREERSREEG) are enriched in basic and acidic residues. The segment covering 1244-1275 (LEDEGEQPAPEEDELEEDELGQQSMEDSEEDC) has biased composition (acidic residues). Residues 1307 to 1324 (DSPPDPQPPAASGPPSTV) are compositionally biased toward pro residues. Positions 1439–1473 (EVGMRVRLAELQRRYKEKQRELARLQRKHDHERDE) form a coiled coil. Basic and acidic residues predominate over residues 1457–1475 (QRELARLQRKHDHERDESS). Over residues 1478 to 1492 (PARRGPGRPRKRKHS) the composition is skewed to basic residues. Residues 1751-1761 (GKKKAKGKAKG) show a composition bias toward basic residues. Residues 1868–1888 (FDDNSSFSEEEEDEEEEEEDS) show a composition bias toward acidic residues. Serine 2274 bears the Phosphoserine mark. 3 disordered regions span residues 2317–2336 (SDCH…LAAG), 2348–2383 (SSSS…SDDE), and 2432–2472 (GAGS…ENRP). The span at 2348 to 2371 (SSSSSGSSTSSSSGSVSTSSLCSS) shows a compositional bias: low complexity. A compositionally biased stretch (acidic residues) spans 2372 to 2383 (DNEDSSYSSDDE). Residues 2432-2442 (GAGSGPSSSSK) show a composition bias toward low complexity. In terms of domain architecture, BAH spans 2513–2633 (ETLRVGDCAV…PTTGRLVTAD (121 aa)).

In Homo sapiens (Human), this protein is BAH and coiled-coil domain-containing protein 1.